Reading from the N-terminus, the 896-residue chain is Protein translocase subunit SecA (896 aa).

ATP-binding positions include Gln-87, 105-109 (GEGKT), and Asp-507. Residues 853-879 (ESLSENDEASETQTFRRQEKKIGRNDP) form a disordered region. The span at 866 to 876 (TFRRQEKKIGR) shows a compositional bias: basic and acidic residues. The Zn(2+) site is built by Cys-880, Cys-882, Cys-891, and His-892.

It belongs to the SecA family. As to quaternary structure, monomer and homodimer. Part of the essential Sec protein translocation apparatus which comprises SecA, SecYEG and auxiliary proteins SecDF-YajC and YidC. Zn(2+) serves as cofactor.

The protein localises to the cell inner membrane. It localises to the cytoplasm. The enzyme catalyses ATP + H2O + cellular proteinSide 1 = ADP + phosphate + cellular proteinSide 2.. Its function is as follows. Part of the Sec protein translocase complex. Interacts with the SecYEG preprotein conducting channel. Has a central role in coupling the hydrolysis of ATP to the transfer of proteins into and across the cell membrane, serving both as a receptor for the preprotein-SecB complex and as an ATP-driven molecular motor driving the stepwise translocation of polypeptide chains across the membrane. The sequence is that of Protein translocase subunit SecA from Legionella pneumophila (strain Corby).